Here is a 109-residue protein sequence, read N- to C-terminus: Iron-sulfur cluster assembly protein CyaY (109 aa).

It belongs to the frataxin family.

Involved in iron-sulfur (Fe-S) cluster assembly. May act as a regulator of Fe-S biogenesis. The chain is Iron-sulfur cluster assembly protein CyaY from Bordetella avium (strain 197N).